The chain runs to 381 residues: Probable tRNA sulfurtransferase (381 aa).

Positions 68–176 (DLALKLLKKV…NDGAYIFTEK (109 aa)) constitute a THUMP domain. ATP contacts are provided by residues 194–195 (LI), lysine 276, glycine 298, and glutamine 307.

It belongs to the ThiI family.

It localises to the cytoplasm. It catalyses the reaction [ThiI sulfur-carrier protein]-S-sulfanyl-L-cysteine + a uridine in tRNA + 2 reduced [2Fe-2S]-[ferredoxin] + ATP + H(+) = [ThiI sulfur-carrier protein]-L-cysteine + a 4-thiouridine in tRNA + 2 oxidized [2Fe-2S]-[ferredoxin] + AMP + diphosphate. The enzyme catalyses [ThiS sulfur-carrier protein]-C-terminal Gly-Gly-AMP + S-sulfanyl-L-cysteinyl-[cysteine desulfurase] + AH2 = [ThiS sulfur-carrier protein]-C-terminal-Gly-aminoethanethioate + L-cysteinyl-[cysteine desulfurase] + A + AMP + 2 H(+). Its pathway is cofactor biosynthesis; thiamine diphosphate biosynthesis. Functionally, catalyzes the ATP-dependent transfer of a sulfur to tRNA to produce 4-thiouridine in position 8 of tRNAs, which functions as a near-UV photosensor. Also catalyzes the transfer of sulfur to the sulfur carrier protein ThiS, forming ThiS-thiocarboxylate. This is a step in the synthesis of thiazole, in the thiamine biosynthesis pathway. The sulfur is donated as persulfide by IscS. This Methanocaldococcus jannaschii (strain ATCC 43067 / DSM 2661 / JAL-1 / JCM 10045 / NBRC 100440) (Methanococcus jannaschii) protein is Probable tRNA sulfurtransferase.